The primary structure comprises 474 residues: tRNA-2-methylthio-N(6)-dimethylallyladenosine synthase (474 aa).

Positions 3–120 (QKLHIKTWGC…LPEMINQIRG (118 aa)) constitute an MTTase N-terminal domain. Positions 12, 49, 83, 157, 161, and 164 each coordinate [4Fe-4S] cluster. The region spanning 143 to 375 (RAEGPTAFVS…QERINQQAAQ (233 aa)) is the Radical SAM core domain. The region spanning 378-441 (RRMLGTEQRV…TNSLRGEVVR (64 aa)) is the TRAM domain.

Belongs to the methylthiotransferase family. MiaB subfamily. In terms of assembly, monomer. Requires [4Fe-4S] cluster as cofactor.

It localises to the cytoplasm. It catalyses the reaction N(6)-dimethylallyladenosine(37) in tRNA + (sulfur carrier)-SH + AH2 + 2 S-adenosyl-L-methionine = 2-methylsulfanyl-N(6)-dimethylallyladenosine(37) in tRNA + (sulfur carrier)-H + 5'-deoxyadenosine + L-methionine + A + S-adenosyl-L-homocysteine + 2 H(+). Functionally, catalyzes the methylthiolation of N6-(dimethylallyl)adenosine (i(6)A), leading to the formation of 2-methylthio-N6-(dimethylallyl)adenosine (ms(2)i(6)A) at position 37 in tRNAs that read codons beginning with uridine. The polypeptide is tRNA-2-methylthio-N(6)-dimethylallyladenosine synthase (Haemophilus influenzae (strain PittGG)).